We begin with the raw amino-acid sequence, 874 residues long: Alanine--tRNA ligase (874 aa).

Zn(2+)-binding residues include histidine 564, histidine 568, cysteine 665, and histidine 669.

This sequence belongs to the class-II aminoacyl-tRNA synthetase family. It depends on Zn(2+) as a cofactor.

The protein resides in the cytoplasm. It carries out the reaction tRNA(Ala) + L-alanine + ATP = L-alanyl-tRNA(Ala) + AMP + diphosphate. In terms of biological role, catalyzes the attachment of alanine to tRNA(Ala) in a two-step reaction: alanine is first activated by ATP to form Ala-AMP and then transferred to the acceptor end of tRNA(Ala). Also edits incorrectly charged Ser-tRNA(Ala) and Gly-tRNA(Ala) via its editing domain. The polypeptide is Alanine--tRNA ligase (Cupriavidus necator (strain ATCC 17699 / DSM 428 / KCTC 22496 / NCIMB 10442 / H16 / Stanier 337) (Ralstonia eutropha)).